The chain runs to 75 residues: UPF0352 protein YPTB1297 (75 aa).

It belongs to the UPF0352 family.

This Yersinia pseudotuberculosis serotype I (strain IP32953) protein is UPF0352 protein YPTB1297.